Reading from the N-terminus, the 1097-residue chain is Transmembrane protein 132D (1097 aa).

An N-terminal signal peptide occupies residues 1–30 (MCPSEMGTLWYLWSPVLISLAALFSKVTEG). At 31–913 (RGILESIQRF…PDQAAKGLSD (883 aa)) the chain is on the extracellular side. The segment covering 233 to 245 (DERGDCAKEDSRK) has biased composition (basic and acidic residues). Disordered stretches follow at residues 233-263 (DERG…SPPL) and 885-906 (SFPD…DPDQ). Residues 914 to 934 (LEIGMYALLGVFCLAILVFLI) form a helical membrane-spanning segment. Residues 935–1097 (NCVTFALKYR…SCMERLHEHV (163 aa)) are Cytoplasmic-facing. The interval 1021 to 1042 (MLTDDKEQKSEPPTSPTSKRKR) is disordered.

It belongs to the TMEM132 family. In terms of tissue distribution, expressed in mature oligodendrocytes in the brain.

It is found in the membrane. In terms of biological role, regulates neuronal morphology via inhibition of the WAVE regulatory complex (WCR), a complex that controls F-actin cytoskeletal dynamics. The polypeptide is Transmembrane protein 132D (Tmem132d) (Rattus norvegicus (Rat)).